A 117-amino-acid chain; its full sequence is Transcription elongation factor SPT4-B (117 aa).

The interaction with SUPT5H stretch occupies residues 1-40 (MALETVPKDLRHLRACLLCSLVKTIDQFEYDGCDNCDAYL). The segment at 16–36 (CLLCSLVKTIDQFEYDGCDNC) adopts a C4-type zinc-finger fold.

Belongs to the SPT4 family. In terms of assembly, interacts with SUPT5H to form DSIF. DSIF interacts with the positive transcription elongation factor b complex (P-TEFb complex), which is composed of CDK9 and cyclin-T (CCNT1 or CCNT2). DSIF interacts with RNA polymerase II, and this interaction is reduced by phosphorylation of the C-terminal domain (CTD) of POLR2A by P-TEFb. DSIF also interacts with the NELF complex, which is composed of WHSC2/NELFA, COBRA1/NELFB, TH1L/NELFD and RDBP/NELFE, and this interaction occurs following prior binding of DSIF to RNA polymerase II. DSIF also interacts with HRMT1L2/PRMT1, HTATSF1/TATSF1, RNGTT/CAP1A, SKB1/PRMT5, SUPT6H, and can interact with PIN1. Post-translationally, ubiquitinated by Ubr5 when not assembled in the DSIF complex, leading to its degradation: Ubr5 recognizes and binds a degron that is not accessible when Supt4h1b is part of the DSIF complex. In terms of tissue distribution, expressed in brain, heart and liver.

It is found in the nucleus. Its function is as follows. Component of the DRB sensitivity-inducing factor complex (DSIF complex), which regulates mRNA processing and transcription elongation by RNA polymerase II. DSIF positively regulates mRNA capping by stimulating the mRNA guanylyltransferase activity of RNGTT/CAP1A. DSIF also acts cooperatively with the negative elongation factor complex (NELF complex) to enhance transcriptional pausing at sites proximal to the promoter. Transcriptional pausing may facilitate the assembly of an elongation competent RNA polymerase II complex. DSIF and NELF promote pausing by inhibition of the transcription elongation factor TFIIS/S-II. TFIIS/S-II binds to RNA polymerase II at transcription pause sites and stimulates the weak intrinsic nuclease activity of the enzyme. Cleavage of blocked transcripts by RNA polymerase II promotes the resumption of transcription from the new 3' terminus and may allow repeated attempts at transcription through natural pause sites. The polypeptide is Transcription elongation factor SPT4-B (Supt4h1b) (Mus musculus (Mouse)).